The following is a 367-amino-acid chain: Glutamate 5-kinase (367 aa).

ATP is bound at residue K10. The substrate site is built by S50, D137, and N149. T169 to D170 contributes to the ATP binding site. Residues A275–E353 enclose the PUA domain.

The protein belongs to the glutamate 5-kinase family.

It localises to the cytoplasm. The catalysed reaction is L-glutamate + ATP = L-glutamyl 5-phosphate + ADP. It functions in the pathway amino-acid biosynthesis; L-proline biosynthesis; L-glutamate 5-semialdehyde from L-glutamate: step 1/2. Its function is as follows. Catalyzes the transfer of a phosphate group to glutamate to form L-glutamate 5-phosphate. The chain is Glutamate 5-kinase from Salmonella paratyphi B (strain ATCC BAA-1250 / SPB7).